Here is a 275-residue protein sequence, read N- to C-terminus: UPF0328 protein ECU05_0050 (275 aa).

The protein belongs to the UPF0328 family.

In Encephalitozoon cuniculi (strain GB-M1) (Microsporidian parasite), this protein is UPF0328 protein ECU05_0050.